The sequence spans 538 residues: Syncytin-2 (538 aa).

The signal sequence occupies residues 1 to 15; the sequence is MGLLLLVLILTPSLA. Over 16–478 the chain is Extracellular; sequence AYRHPDFPLL…GWLNWEGTWK (463 aa). The CXXC motif lies at 43-46; that stretch reads CWLC. Disulfide bonds link C43/C46, C43/C439, and C431/C438. N133, N146, N177, N220, N241, N247, N312, and N332 each carry an N-linked (GlcNAc...) asparagine glycan. Positions 354-374 are fusion peptide; sequence FIPLLAGLGILAGTGTGIAGI. The CKS-17 motif lies at 414 to 430; the sequence is LQNRRGLDMLTAAQGGI. The CX6CC motif lies at 431-439; that stretch reads CLALDEKCC. N443 is a glycosylation site (N-linked (GlcNAc...) asparagine). The helical transmembrane segment at 479–499 threads the bilayer; the sequence is WFSWVLPLTGPLVSLLLLLLF. At 500-538 the chain is on the cytoplasmic side; the sequence is GPCLLNLITQFVSSRLQAIKLQTNLSAGRHPRNIQESPF.

It belongs to the gamma type-C retroviral envelope protein family. HERV class-I FRD env subfamily. In terms of assembly, the surface and transmembrane proteins form a heterodimer. They are attached by non-covalent interactions or by a labile interchain disulfide bond. Post-translationally, specific enzymatic cleavages in vivo yield the mature SU and TM proteins. The CXXC motif is highly conserved across a broad range of retroviral envelope proteins. It is thought to participate in the formation of a labile disulfide bond possibly with the CX6CC motif present in the transmembrane protein.

It localises to the virion. The protein resides in the cell membrane. This endogenous retroviral envelope protein has retained its original fusogenic properties and participates in trophoblast fusion and the formation of a syncytium during placenta morphogenesis. The interaction with MFSD2A is apparently important for this process. Functionally, endogenous envelope proteins may have kept, lost or modified their original function during evolution but this one can still make pseudotypes with MLV, HIV-1 or SIV-1 virions and confer infectivity. Retroviral envelope proteins mediate receptor recognition and membrane fusion during early infection. The surface protein mediates receptor recognition, while the transmembrane protein anchors the envelope heterodimer to the viral membrane through one transmembrane domain. The other hydrophobic domain, called fusion peptide, mediates fusion of the viral membrane with the target cell membrane. In Pan troglodytes (Chimpanzee), this protein is Syncytin-2 (ERVFRD-1).